The primary structure comprises 409 residues: Failed axon connections homolog (409 aa).

A helical membrane pass occupies residues 68 to 88 (YLTGGALLAAAAYLLHELLVI). The segment at 372-409 (DEGAENSFSRTPDTDFTGHSLFDSDVDMDDYTDHEQCK) is disordered.

This sequence belongs to the FAX family.

The protein localises to the membrane. In terms of biological role, may play a role in axonal development. The polypeptide is Failed axon connections homolog (FAXC) (Homo sapiens (Human)).